Reading from the N-terminus, the 339-residue chain is Putative agmatine deiminase (339 aa).

C331 serves as the catalytic Amidino-cysteine intermediate.

It belongs to the agmatine deiminase family.

The enzyme catalyses agmatine + H2O = N-carbamoylputrescine + NH4(+). In Streptomyces coelicolor (strain ATCC BAA-471 / A3(2) / M145), this protein is Putative agmatine deiminase.